The sequence spans 188 residues: Thymidine kinase (188 aa).

G17–T24 is a binding site for ATP. E92 serves as the catalytic Proton acceptor. F121 contacts substrate. Residues C146 and C149 each coordinate Zn(2+). L166–G170 contributes to the substrate binding site. Positions 179 and 182 each coordinate Zn(2+).

It belongs to the thymidine kinase family.

It catalyses the reaction thymidine + ATP = dTMP + ADP + H(+). In terms of biological role, phosphorylates thymidine. ASFV replicates in the cytoplasm of infected cells and contains genes encoding a number of enzymes needed for DNA synthesis, including thymidine kinase. Important for growth in swine macrophages in vitro and is a virus virulence factor in swine. This African swine fever virus (isolate Tick/South Africa/Pretoriuskop Pr4/1996) (ASFV) protein is Thymidine kinase.